The following is a 237-amino-acid chain: Large ribosomal subunit protein uL1 (237 aa).

Belongs to the universal ribosomal protein uL1 family. In terms of assembly, part of the 50S ribosomal subunit.

Its function is as follows. Binds directly to 23S rRNA. The L1 stalk is quite mobile in the ribosome, and is involved in E site tRNA release. In terms of biological role, protein L1 is also a translational repressor protein, it controls the translation of the L11 operon by binding to its mRNA. This is Large ribosomal subunit protein uL1 from Leptothrix cholodnii (strain ATCC 51168 / LMG 8142 / SP-6) (Leptothrix discophora (strain SP-6)).